The primary structure comprises 313 residues: MSSREIRIATRKSALALWQAEYVKARLEAAHPGLLVTLVPMVSRGDKLLDSPLSKIGGKGLFVKELETALLENEADIAVHSMKDVPMDFPEGLGLFCICEREDPRDAFVSNTYSSLDALPAGSIVGTSSLRRQAQLLTRRPDLEIRFLRGNVNTRLAKLDAGEYDAIILAAAGLIRLGFEDRITSAISVDDSLPAGGQGAVGIECRSADTEIHALLAPLHHADTADRVTAERALNKHLNGGCQVPIACYAVLEGDQLWLRGLVGEPSGGKLLNAQARAPRAAAETLGVQVAEDLLSQGADDILKAVYGEAGHE.

Cysteine 242 carries the S-(dipyrrolylmethanemethyl)cysteine modification.

It belongs to the HMBS family. As to quaternary structure, monomer. Requires dipyrromethane as cofactor.

It carries out the reaction 4 porphobilinogen + H2O = hydroxymethylbilane + 4 NH4(+). It functions in the pathway porphyrin-containing compound metabolism; protoporphyrin-IX biosynthesis; coproporphyrinogen-III from 5-aminolevulinate: step 2/4. Tetrapolymerization of the monopyrrole PBG into the hydroxymethylbilane pre-uroporphyrinogen in several discrete steps. The sequence is that of Porphobilinogen deaminase from Pseudomonas fluorescens (strain Pf0-1).